Consider the following 117-residue polypeptide: Prefoldin subunit beta (117 aa).

This sequence belongs to the prefoldin subunit beta family. As to quaternary structure, heterohexamer of two alpha and four beta subunits.

The protein resides in the cytoplasm. In terms of biological role, molecular chaperone capable of stabilizing a range of proteins. Seems to fulfill an ATP-independent, HSP70-like function in archaeal de novo protein folding. The chain is Prefoldin subunit beta (pfdB) from Pyrococcus abyssi (strain GE5 / Orsay).